The chain runs to 1397 residues: DNA-directed RNA polymerase subunit beta' (1397 aa).

Positions 75, 77, 90, and 93 each coordinate Zn(2+). Residues Asp-465, Asp-467, and Asp-469 each coordinate Mg(2+). 4 residues coordinate Zn(2+): Cys-819, Cys-893, Cys-900, and Cys-903.

It belongs to the RNA polymerase beta' chain family. As to quaternary structure, the RNAP catalytic core consists of 2 alpha, 1 beta, 1 beta' and 1 omega subunit. When a sigma factor is associated with the core the holoenzyme is formed, which can initiate transcription. It depends on Mg(2+) as a cofactor. Zn(2+) serves as cofactor.

The enzyme catalyses RNA(n) + a ribonucleoside 5'-triphosphate = RNA(n+1) + diphosphate. Its function is as follows. DNA-dependent RNA polymerase catalyzes the transcription of DNA into RNA using the four ribonucleoside triphosphates as substrates. The protein is DNA-directed RNA polymerase subunit beta' of Acinetobacter baumannii (strain SDF).